The following is a 285-amino-acid chain: Eukaryotic translation initiation factor 3 subunit F-2 (285 aa).

One can recognise an MPN domain in the interval 11–145 (VFLKPLVLFQ…TRLYCAVEMG (135 aa)).

Belongs to the eIF-3 subunit F family. In terms of assembly, component of the eukaryotic translation initiation factor 3 (eIF-3) complex. The eIF-3 complex interacts with pix.

It localises to the cytoplasm. Its function is as follows. Component of the eukaryotic translation initiation factor 3 (eIF-3) complex, which is involved in protein synthesis of a specialized repertoire of mRNAs and, together with other initiation factors, stimulates binding of mRNA and methionyl-tRNAi to the 40S ribosome. The eIF-3 complex specifically targets and initiates translation of a subset of mRNAs involved in cell proliferation. The protein is Eukaryotic translation initiation factor 3 subunit F-2 of Drosophila sechellia (Fruit fly).